Reading from the N-terminus, the 154-residue chain is MAAASAMAEASSETTSEEGQSIQEPKEANSTKAQKQKRRGCRGSRRRHANRRGDSFGDSFTPYFPRVLKQVHQGLSLSQEAVSVMDSMIHDILDRIATEAGQLAHYTKRVTITSRDIQMAVRLLLPGKMGKLAEAQGTNAALRTSLCAIWQQRK.

The segment covering 1 to 18 (MAAASAMAEASSETTSEE) has biased composition (low complexity). A disordered region spans residues 1 to 61 (MAAASAMAEA…RGDSFGDSFT (61 aa)). The span at 34–50 (QKQKRRGCRGSRRRHAN) shows a compositional bias: basic residues.

The protein belongs to the histone H2B family. As to quaternary structure, the nucleosome is a histone octamer containing two molecules each of H2A, H2B, H3 and H4 assembled in one H3-H4 heterotetramer and two H2A-H2B heterodimers. The octamer wraps approximately 147 bp of DNA.

It is found in the nucleus. The protein resides in the chromosome. Core component of nucleosome. Nucleosomes wrap and compact DNA into chromatin, limiting DNA accessibility to the cellular machineries which require DNA as a template. Histones thereby play a central role in transcription regulation, DNA repair, DNA replication and chromosomal stability. DNA accessibility is regulated via a complex set of post-translational modifications of histones, also called histone code, and nucleosome remodeling. The protein is Histone H2B type F-M of Homo sapiens (Human).